Reading from the N-terminus, the 63-residue chain is MKANDIRDLSTTEIQDQEKALKEELFNLRFQLATGQLENTARIREVRKAIARMKTIVRERELA.

This sequence belongs to the universal ribosomal protein uL29 family.

This is Large ribosomal subunit protein uL29 from Listeria innocua serovar 6a (strain ATCC BAA-680 / CLIP 11262).